The following is a 231-amino-acid chain: S-norcoclaurine synthase 2 (231 aa).

107 to 109 (YKE) lines the dopamine pocket. K121 (proton donor) is an active-site residue. Residue D140 participates in (4-hydroxyphenyl)acetaldehyde binding. Residues 210–230 (LLLCLIICLVIAGGMFVAGVP) form a helical membrane-spanning segment.

Belongs to the BetVI family. In terms of tissue distribution, expressed in roots, stems and leaves. Detected in flower buds and germinating seeds. Low expression in carpels. Restricted to sieve elements of the phloem adjacent or proximal to laticifers.

It is found in the endoplasmic reticulum membrane. It localises to the vacuole membrane. It carries out the reaction (4-hydroxyphenyl)acetaldehyde + dopamine = (S)-norcoclaurine + H2O. It functions in the pathway alkaloid biosynthesis; (S)-reticuline biosynthesis. With respect to regulation, activity doubles within 5 hours of elicitor treatment and continues to increase for at least 80 hours. Functionally, involved in the biosynthesis of (S)-coclaurine, the common precursor of all benzylisoquinoline alkaloids such as morphine, sanguinarine, codeine or papaverine. Condenses dopamine and 4-hydroxyphenylacetaldehyde. The polypeptide is S-norcoclaurine synthase 2 (Papaver somniferum (Opium poppy)).